We begin with the raw amino-acid sequence, 632 residues long: Extracellular metalloproteinase 1 (632 aa).

The first 19 residues, 1–19 (MHGLLLAAGLISLPLHVLA), serve as a signal peptide directing secretion. Positions 20–246 (HPQPSSTSLA…VVDYVAHATF (227 aa)) are excised as a propeptide. An N-linked (GlcNAc...) asparagine glycan is attached at Asn-284. Residue Thr-430 coordinates Zn(2+). His-431 is a catalytic residue. Ser-434 contacts Zn(2+). Residue Asn-591 is glycosylated (N-linked (GlcNAc...) asparagine).

Belongs to the peptidase M36 family. The cofactor is Zn(2+).

The protein localises to the secreted. Its activity is regulated as follows. PMSF, soybean trypsin inhibitor (SBTI) and chymostatin strongly inhibit the proteinase. Functionally, secreted metalloproteinase probably acting as a virulence factor. This Arthroderma otae (Microsporum canis) protein is Extracellular metalloproteinase 1 (MEP1).